A 508-amino-acid polypeptide reads, in one-letter code: MSMSSIPSSSQSGKLYGWVERIGNKVPHPFLLFIYLIIVLMVTTAILSAFGVSAKNPTDGTPVVVKNLLSVEGLHWFLPNVIKNFSGFAPLGAILALVLGAGLAERVGLLPALMVKMASHVNARYASYMVLFIAFFSHISSDAALVIMPPMGALIFLAVGRHPVAGLLAAIAGVGCGFTANLLIVTTDVLLSGISTEAAAAFNPQMHVSVIDNWYFMASSVVVLTIVGGLITDKIIEPRLGQWQGNSDEKLQTLTESQRFGLRIAGVVSLLFIAAIALMVIPQNGILRDPINHTVMPSPFIKGIVPLIILFFFVVSLAYGIATRTIRRQADLPHLMIEPMKEMAGFIVMVFPLAQFVAMFNWSNMGKFIAVGLTDILESSGLSGIPAFVGLALLSSFLCMFIASGSAIWSILAPIFVPMFMLLGFHPAFAQILFRIADSSVLPLAPVSPFVPLFLGFLQRYKPDAKLGTYYSLVLPYPLIFLVVWLLMLLAWYLVGLPIGPGIYPRLS.

13 helical membrane passes run 30 to 50 (FLLF…LSAF), 85 to 105 (FSGF…GLAE), 121 to 139 (VNAR…FSHI), 140 to 159 (SSDA…FLAV), 164 to 184 (VAGL…NLLI), 211 to 231 (IDNW…GGLI), 261 to 281 (GLRI…LMVI), 303 to 323 (GIVP…GIAT), 343 to 363 (MAGF…FNWS), 382 to 402 (LSGI…CMFI), 405 to 425 (GSAI…LLGF), 439 to 459 (SSVL…GFLQ), and 479 to 499 (LIFL…GLPI).

The protein localises to the cell inner membrane. The enzyme catalyses N-(4-aminobenzoyl)-L-glutamate(in) + H(+)(in) = N-(4-aminobenzoyl)-L-glutamate(out) + H(+)(out). Its activity is regulated as follows. Completely inhibited by 100 nM sodium azide and by the proton ionophore carbonyl cyanide m-chlorophenylhydrazone (CCCP). Is also strongly inhibited by 100 mM potassium fluoride. Its function is as follows. Essential for aminobenzoyl-glutamate utilization. It catalyzes the concentration-dependent uptake of p-aminobenzoyl-glutamate (PABA-GLU) into the cell and allows accumulation of PABA-GLU to a concentration enabling AbgAB to catalyze cleavage into p-aminobenzoate and glutamate. It also seems to increase the sensitivity to low levels of aminobenzoyl-glutamate. May actually serve physiologically as a transporter for some other molecule, perhaps a dipeptide, and that it transports p-aminobenzoyl-glutamate as a secondary activity. The physiological role of abgABT should be clarified. This Escherichia coli (strain K12) protein is p-aminobenzoyl-glutamate transport protein.